The following is a 498-amino-acid chain: ATP synthase subunit beta, chloroplastic (498 aa).

172-179 (GGAGVGKT) is a binding site for ATP.

The protein belongs to the ATPase alpha/beta chains family. F-type ATPases have 2 components, CF(1) - the catalytic core - and CF(0) - the membrane proton channel. CF(1) has five subunits: alpha(3), beta(3), gamma(1), delta(1), epsilon(1). CF(0) has four main subunits: a(1), b(1), b'(1) and c(9-12).

The protein resides in the plastid. Its subcellular location is the chloroplast thylakoid membrane. The catalysed reaction is ATP + H2O + 4 H(+)(in) = ADP + phosphate + 5 H(+)(out). Functionally, produces ATP from ADP in the presence of a proton gradient across the membrane. The catalytic sites are hosted primarily by the beta subunits. The sequence is that of ATP synthase subunit beta, chloroplastic from Balaka seemannii.